The primary structure comprises 140 residues: MSPEIPPEWKKFRYRGKSLEDLLNMPMDEFIKLLPSRQRRSLKRGFSDKQRRLLEKIRKISREGKQNKVIKTHVRNMVILPEMVGLRFAVYNGKEFVEFQVVPEMIGRYLGEYSITTKKVEHGEPGLKATKSSLFLAMKG.

Belongs to the universal ribosomal protein uS19 family.

In terms of biological role, protein S19 forms a complex with S13 that binds strongly to the 16S ribosomal RNA. This chain is Small ribosomal subunit protein uS19, found in Sulfolobus acidocaldarius (strain ATCC 33909 / DSM 639 / JCM 8929 / NBRC 15157 / NCIMB 11770).